Reading from the N-terminus, the 172-residue chain is Stellate protein CG33237 (172 aa).

Belongs to the casein kinase 2 subunit beta family. As to quaternary structure, interacts in vitro with the casein kinase 2 alpha subunit (CkII-alpha). The relevance of such interaction is however unclear in vivo. As to expression, probably not expressed in wild-type flies. In males lacking the Y chromosome, it is testis-specific and constitutes the main component of star-shaped crystals.

Functionally, unknown. In males lacking the Y chromosome, its strong overexpression leads to the appearance of proteinaceous star-shaped crystals in the primary spermatocytes causing meiotic drive, possibly by interfering with normal casein kinase 2 activity. The polypeptide is Stellate protein CG33237 (Ste:CG33237) (Drosophila melanogaster (Fruit fly)).